Consider the following 730-residue polypeptide: Procollagen-lysine,2-oxoglutarate 5-dioxygenase 1 (730 aa).

An N-terminal signal peptide occupies residues 1–20 (MVPPAVLLPWVVLPLLGVQG). N-linked (GlcNAc...) asparagine glycosylation is found at N200, N403, and N541. The 92-residue stretch at 639 to 730 (QFELAFVVRY…RYIAVSFIDP (92 aa)) folds into the Fe2OG dioxygenase domain. Positions 659 and 661 each coordinate Fe cation. The N-linked (GlcNAc...) asparagine glycan is linked to N689. Residue H711 coordinates Fe cation. Residue R721 is part of the active site.

Homodimer. Fe(2+) serves as cofactor. Requires L-ascorbate as cofactor.

The protein resides in the rough endoplasmic reticulum membrane. The enzyme catalyses L-lysyl-[collagen] + 2-oxoglutarate + O2 = (5R)-5-hydroxy-L-lysyl-[collagen] + succinate + CO2. Its function is as follows. Forms hydroxylysine residues in -Xaa-Lys-Gly- sequences in collagens. These hydroxylysines serve as sites of attachment for carbohydrate units and are essential for the stability of the intermolecular collagen cross-links. The chain is Procollagen-lysine,2-oxoglutarate 5-dioxygenase 1 (PLOD1) from Gallus gallus (Chicken).